A 75-amino-acid chain; its full sequence is Translational regulator CsrA (75 aa).

This sequence belongs to the CsrA/RsmA family. Homodimer; the beta-strands of each monomer intercalate to form a hydrophobic core, while the alpha-helices form wings that extend away from the core.

The protein resides in the cytoplasm. Functionally, a translational regulator that binds mRNA to regulate translation initiation and/or mRNA stability. Usually binds in the 5'-UTR at or near the Shine-Dalgarno sequence preventing ribosome-binding, thus repressing translation. Its main target seems to be the major flagellin gene, while its function is anatagonized by FliW. The polypeptide is Translational regulator CsrA (Acetivibrio thermocellus (strain ATCC 27405 / DSM 1237 / JCM 9322 / NBRC 103400 / NCIMB 10682 / NRRL B-4536 / VPI 7372) (Clostridium thermocellum)).